The chain runs to 162 residues: Putative ankyrin repeat protein R664 (162 aa).

ANK repeat units lie at residues 10–40 (KKLV…NVNY), 47–78 (NDTP…DVNY), and 82–111 (YHET…NPYL).

This is Putative ankyrin repeat protein R664 from Acanthamoeba polyphaga mimivirus (APMV).